A 206-amino-acid chain; its full sequence is LOB domain-containing protein 35 (206 aa).

The region spanning 4–105 (TCCSACKVMK…EQINSAKNEL (102 aa)) is the LOB domain. The disordered stretch occupies residues 184–206 (ASTSGGTSATQKTLPFPQNHNQP).

It belongs to the LOB domain-containing protein family.

The chain is LOB domain-containing protein 35 (LBD35) from Arabidopsis thaliana (Mouse-ear cress).